Reading from the N-terminus, the 333-residue chain is Gap junction alpha-4 protein (333 aa).

The Cytoplasmic portion of the chain corresponds to 1 to 20; that stretch reads MGDWGFLEKLLDQVQEHSTV. A helical transmembrane segment spans residues 21–40; it reads VGKIWLTVLFIFRILILGLA. Over 41–76 the chain is Extracellular; sequence GESVWGDEQSDFECNTAQPGCTNVCYDQAFPISHIR. A helical membrane pass occupies residues 77–99; it reads YWVLQFLFVSTPTLIYLGHVIYL. At 100–148 the chain is on the cytoplasmic side; the sequence is SRREERLRQKEGELRALPSKDPHVERALAAIEHQMAKISVAEDGRLRIR. A helical transmembrane segment spans residues 149 to 171; that stretch reads GALMGTYVISVLCKSVLEAGFLY. Over 172-208 the chain is Extracellular; sequence GQWRLYGWTMEPVFVCQRAPCPHVVDCYVSRPTEKTI. A helical membrane pass occupies residues 209–231; that stretch reads FIIFMLVVGVISLVLNLLELVHL. The Cytoplasmic segment spans residues 232–333; it reads LCRCVSREIK…NSSASKKQYV (102 aa). Residues 292 to 333 form a disordered region; that stretch reads ANLTTEERLTSTRPPPFVNAAPQGGQKSSSRPNSSASKKQYV. A compositionally biased stretch (low complexity) spans 318–333; sequence KSSSRPNSSASKKQYV.

Belongs to the connexin family. Alpha-type (group II) subfamily. As to quaternary structure, a connexon is composed of a hexamer of connexins. Highly expressed in lung.

The protein resides in the cell membrane. The protein localises to the cell junction. It localises to the gap junction. Its function is as follows. One gap junction consists of a cluster of closely packed pairs of transmembrane channels, the connexons, through which materials of low MW diffuse from one cell to a neighboring cell. The polypeptide is Gap junction alpha-4 protein (Gja4) (Rattus norvegicus (Rat)).